The chain runs to 271 residues: Thiazole synthase (271 aa).

The active-site Schiff-base intermediate with DXP is Lys95. Residues Gly156, 182–183 (AG), and 204–205 (NT) each bind 1-deoxy-D-xylulose 5-phosphate.

Belongs to the ThiG family. Homotetramer. Forms heterodimers with either ThiH or ThiS.

Its subcellular location is the cytoplasm. The enzyme catalyses [ThiS sulfur-carrier protein]-C-terminal-Gly-aminoethanethioate + 2-iminoacetate + 1-deoxy-D-xylulose 5-phosphate = [ThiS sulfur-carrier protein]-C-terminal Gly-Gly + 2-[(2R,5Z)-2-carboxy-4-methylthiazol-5(2H)-ylidene]ethyl phosphate + 2 H2O + H(+). The protein operates within cofactor biosynthesis; thiamine diphosphate biosynthesis. Catalyzes the rearrangement of 1-deoxy-D-xylulose 5-phosphate (DXP) to produce the thiazole phosphate moiety of thiamine. Sulfur is provided by the thiocarboxylate moiety of the carrier protein ThiS. In vitro, sulfur can be provided by H(2)S. This is Thiazole synthase from Shewanella amazonensis (strain ATCC BAA-1098 / SB2B).